The chain runs to 1052 residues: uncharacterized protein (1052 aa).

This sequence belongs to the IIV-6 050L family.

This is an uncharacterized protein from Invertebrate iridescent virus 6 (IIV-6).